We begin with the raw amino-acid sequence, 601 residues long: Ribosomal oxygenase 1 (601 aa).

Basic and acidic residues predominate over residues 1–11; the sequence is MAACGAEERQR. The tract at residues 1–149 is disordered; that stretch reads MAACGAEERQ…PGGGGVPGLL (149 aa). Over residues 61–70 the composition is skewed to low complexity; that stretch reads ERAAPPQGAA. A compositionally biased stretch (basic and acidic residues) spans 73-87; it reads DRVERAGSSEAKQGD. In terms of domain architecture, JmjC spans 254 to 399; that stretch reads CSLRLLSPQA…DFLEKLLPAA (146 aa). Residues His-300, Asp-302, and His-365 each coordinate Fe cation.

Belongs to the ROX family. NO66 subfamily. Fe(2+) serves as cofactor.

The protein localises to the nucleus. It localises to the nucleolus. The protein resides in the nucleoplasm. It carries out the reaction N(6),N(6)-dimethyl-L-lysyl(36)-[histone H3] + 2 2-oxoglutarate + 2 O2 = L-lysyl(36)-[histone H3] + 2 formaldehyde + 2 succinate + 2 CO2. It catalyses the reaction N(6)-methyl-L-lysyl-[protein] + 2-oxoglutarate + O2 = L-lysyl-[protein] + formaldehyde + succinate + CO2. The catalysed reaction is L-histidyl-[protein] + 2-oxoglutarate + O2 = (3S)-3-hydroxy-L-histidyl-[protein] + succinate + CO2. Functionally, oxygenase that can act as both a histone lysine demethylase and a ribosomal histidine hydroxylase. Specifically demethylates 'Lys-4' (H3K4me) and 'Lys-36' (H3K36me) of histone H3, thereby playing a central role in histone code. Preferentially demethylates trimethylated H3 'Lys-4' (H3K4me3) and monomethylated H3 'Lys-4' (H3K4me1) residues, while it has weaker activity for dimethylated H3 'Lys-36' (H3K36me2). Also catalyzes demethylation of non-histone proteins. Also catalyzes the hydroxylation of 60S ribosomal protein L8 on 'His-216', thereby playing a role in ribosome biogenesis. This is Ribosomal oxygenase 1 (RIOX1) from Gallus gallus (Chicken).